The following is a 1840-amino-acid chain: Collagen alpha-1(V) chain (1840 aa).

A signal peptide spans 1 to 30; it reads MDVHTRWKAPRPGAPLLSSPLLLLLLLLWA. The Laminin G-like domain occupies 72–244; that stretch reads DVAYRVSKDA…DYCEHYSPDC (173 aa). Positions 231-445 are nonhelical region; it reads RAAYDYCEHY…MPANQDTIYE (215 aa). Sulfotyrosine occurs at positions 234, 236, 240, 262, 263, 336, 338, and 344. 2 disordered regions span residues 241-547 and 561-1576; these read SPDC…QESQ and GPAG…EVIQ. Over residues 258–268 the composition is skewed to acidic residues; the sequence is NPDEYYPEGEG. 3 stretches are compositionally biased toward low complexity: residues 335 to 352, 375 to 387, and 462 to 471; these read DYDY…PYED, PTST…SSNP, and IIEPGMLIEG. Positions 446 to 560 are interrupted collagenous region; sequence GIGGPRGEKG…ILQQARLALR (115 aa). Residues 472 to 487 are compositionally biased toward pro residues; that stretch reads PPGPEGPAGLPGPPGT. 2 stretches are compositionally biased toward low complexity: residues 508–525 and 561–572; these read LPGA…LMLP and GPAGPMGLTGRP. Positions 561–1572 are triple-helical region; sequence GPAGPMGLTG…GLPGPPGPPG (1012 aa). 3 positions are modified to 4-hydroxyproline: proline 572, proline 578, and proline 623. Residue lysine 629 is modified to 5-hydroxylysine. Position 641 is a 4-hydroxyproline (proline 641). Lysine 644 carries the post-translational modification 5-hydroxylysine. 5 positions are modified to 4-hydroxyproline: proline 650, proline 656, proline 659, proline 677, and proline 680. A compositionally biased stretch (low complexity) spans 673-688; it reads PRGLPGEPGPRGLLGP. 3-hydroxyproline occurs at positions 682 and 688. A compositionally biased stretch (pro residues) spans 689-698; sequence KGPPGPPGPP. 4-hydroxyproline occurs at positions 692, 698, and 707. Residue lysine 710 is modified to 5-hydroxylysine. 4-hydroxyproline occurs at positions 719, 722, 728, and 734. Positions 724–743 are enriched in low complexity; it reads QQGNPGAQGLPGPQGAIGPP. 5-hydroxylysine is present on lysine 746. Residues 749 to 758 are compositionally biased toward low complexity; sequence LGKPGLPGMP. Residues proline 752, proline 758, proline 764, proline 767, and proline 773 each carry the 4-hydroxyproline modification. Lysine 776 is modified (5-hydroxylysine). A 4-hydroxyproline mark is found at proline 782 and proline 791. Lysine 797, lysine 806, lysine 809, and lysine 812 each carry 5-hydroxylysine. Proline 818 bears the 4-hydroxyproline mark. At lysine 821 the chain carries 5-hydroxylysine. Proline 836 bears the 4-hydroxyproline mark. The span at 839–848 shows a compositional bias: basic and acidic residues; that stretch reads RGEDGPEGPK. Lysine 848 and lysine 866 each carry 5-hydroxylysine. 3 positions are modified to 4-hydroxyproline: proline 872, proline 875, and proline 878. A 5-hydroxylysine modification is found at lysine 884. 4-hydroxyproline is present on residues proline 890 and proline 893. The residue at position 899 (lysine 899) is a 5-hydroxylysine. Proline 905 and proline 908 each carry 4-hydroxyproline. Positions 910–919 are enriched in low complexity; it reads PRGQRGPTGP. Residues proline 932 and proline 947 each carry the 4-hydroxyproline modification. 2 stretches are compositionally biased toward low complexity: residues 973-992 and 1001-1013; these read KDGL…QGKT and VGPQ…TGPM. 4 positions are modified to 4-hydroxyproline: proline 1019, proline 1022, proline 1025, and proline 1031. Residues 1090 to 1106 show a composition bias toward low complexity; that stretch reads SPGERGPAGAAGPIGIP. Pro residues predominate over residues 1108–1117; that stretch reads RPGPQGPPGP. Proline 1223 and proline 1226 each carry 4-hydroxyproline. Over residues 1261–1270 the composition is skewed to low complexity; the sequence is PSGAPGADGP. Gly residues predominate over residues 1296 to 1305; that stretch reads GLPGEGGPLG. Pro residues-rich tracts occupy residues 1382–1400 and 1456–1471; these read TGEP…PGPA and SPGP…PPGL. Proline 1469 and proline 1472 each carry 4-hydroxyproline. Residues 1487-1496 show a composition bias toward low complexity; it reads PGLIGLIGPP. Positions 1528-1543 are enriched in pro residues; sequence PLGPPGPPGLPGPPGP. Positions 1544 to 1556 are enriched in low complexity; it reads KGAKGSSGPTGPK. Residues 1573-1607 are nonhelical region; sequence EVIQPLPIQASRTRRNIDASQLLDDGAGESYVDYA. Sulfotyrosine is present on residues tyrosine 1603 and tyrosine 1606. In terms of domain architecture, Fibrillar collagen NC1 spans 1611-1839; sequence EEIFGSLNSL…GFEVGPACFL (229 aa).

Belongs to the fibrillar collagen family. In terms of assembly, trimers of two alpha 1(V) and one alpha 2(V) chains in most tissues and trimers of one alpha 1(V), one alpha 2(V), and one alpha 3(V) chains in placenta. Interacts with CSPG4. Post-translationally, prolines at the third position of the tripeptide repeating unit (G-X-Y) are hydroxylated in some or all of the chains. Sulfated on 40% of tyrosines. In terms of processing, hydroxylation on proline residues within the sequence motif, GXPG, is most likely to be 4-hydroxy as this fits the requirement for 4-hydroxylation in vertebrates. A high molecular weight form was detected in Schwann cells and peripheral nerve. A lower, probably processed form, is detected in all other tissues tested (at protein level).

It localises to the secreted. It is found in the extracellular space. Its subcellular location is the extracellular matrix. Functionally, type V collagen is a member of group I collagen (fibrillar forming collagen). It is a minor connective tissue component of nearly ubiquitous distribution. Type V collagen binds to DNA, heparan sulfate, thrombospondin, heparin, and insulin. This is Collagen alpha-1(V) chain (Col5a1) from Rattus norvegicus (Rat).